Reading from the N-terminus, the 108-residue chain is UPF0145 protein Ava_0420 (108 aa).

It belongs to the UPF0145 family.

This Trichormus variabilis (strain ATCC 29413 / PCC 7937) (Anabaena variabilis) protein is UPF0145 protein Ava_0420.